Reading from the N-terminus, the 306-residue chain is 2-dehydro-3-deoxy-D-gluconate/2-dehydro-3-deoxy-phosphogluconate aldolase (306 aa).

Residues 61–62, 148–150, and 173–175 contribute to the substrate site; these read TT, YNY, and KDT. K173 functions as the Schiff-base intermediate with substrate in the catalytic mechanism.

Belongs to the DapA family. KDPG aldolase subfamily. Homotetramer; dimer of dimers.

It catalyses the reaction 2-dehydro-3-deoxy-6-phospho-D-gluconate = D-glyceraldehyde 3-phosphate + pyruvate. The enzyme catalyses 2-dehydro-3-deoxy-D-gluconate = D-glyceraldehyde + pyruvate. It participates in carbohydrate acid metabolism; 2-dehydro-3-deoxy-D-gluconate degradation; D-glyceraldehyde 3-phosphate and pyruvate from 2-dehydro-3-deoxy-D-gluconate: step 2/2. In terms of biological role, involved in the degradation of glucose via the Entner-Doudoroff pathway. Catalyzes the reversible cleavage of 2-keto-3-deoxy-6-phosphogluconate (KDPG) and 2-keto-3-deoxygluconate (KDG) forming pyruvate and glyceraldehyde 3-phosphate or glyceraldehyde, respectively. It is not able to use 2-keto-3-deoxy-6-phosphogalactonate (KDPGal) and 2-keto-3-deoxygalactonate (KDGal) as substrate. The chain is 2-dehydro-3-deoxy-D-gluconate/2-dehydro-3-deoxy-phosphogluconate aldolase (kdgA) from Thermoproteus tenax.